Here is a 365-residue protein sequence, read N- to C-terminus: DNA replication and repair protein RecF (365 aa).

Gly30–Thr37 is a binding site for ATP.

It belongs to the RecF family.

It is found in the cytoplasm. In terms of biological role, the RecF protein is involved in DNA metabolism; it is required for DNA replication and normal SOS inducibility. RecF binds preferentially to single-stranded, linear DNA. It also seems to bind ATP. This chain is DNA replication and repair protein RecF, found in Streptococcus pneumoniae serotype 2 (strain D39 / NCTC 7466).